A 37-amino-acid chain; its full sequence is Large ribosomal subunit protein bL36 (37 aa).

It belongs to the bacterial ribosomal protein bL36 family.

The chain is Large ribosomal subunit protein bL36 from Mycoplasmopsis synoviae (strain 53) (Mycoplasma synoviae).